The primary structure comprises 1061 residues: Error-prone DNA polymerase (1061 aa).

This sequence belongs to the DNA polymerase type-C family. DnaE2 subfamily.

The protein localises to the cytoplasm. It carries out the reaction DNA(n) + a 2'-deoxyribonucleoside 5'-triphosphate = DNA(n+1) + diphosphate. Functionally, DNA polymerase involved in damage-induced mutagenesis and translesion synthesis (TLS). It is not the major replicative DNA polymerase. The polypeptide is Error-prone DNA polymerase (Bdellovibrio bacteriovorus (strain ATCC 15356 / DSM 50701 / NCIMB 9529 / HD100)).